A 359-amino-acid chain; its full sequence is DNA replication and repair protein RecF (359 aa).

ATP is bound at residue 30 to 37; the sequence is GPNGSGKT.

It belongs to the RecF family.

It localises to the cytoplasm. The RecF protein is involved in DNA metabolism; it is required for DNA replication and normal SOS inducibility. RecF binds preferentially to single-stranded, linear DNA. It also seems to bind ATP. The sequence is that of DNA replication and repair protein RecF from Aliivibrio fischeri (strain MJ11) (Vibrio fischeri).